The following is a 134-amino-acid chain: Profilin-2 (134 aa).

Residues cysteine 13 and cysteine 118 are joined by a disulfide bond. An Involved in PIP2 interaction motif is present at residues 84 to 100 (AVIRGKKGSGGITIKKT). Threonine 114 is modified (phosphothreonine).

This sequence belongs to the profilin family. As to quaternary structure, occurs in many kinds of cells as a complex with monomeric actin in a 1:1 ratio. Phosphorylated by MAP kinases.

It localises to the cytoplasm. Its subcellular location is the cytoskeleton. Its function is as follows. Binds to actin and affects the structure of the cytoskeleton. At high concentrations, profilin prevents the polymerization of actin, whereas it enhances it at low concentrations. By binding to PIP2, it inhibits the formation of IP3 and DG. The protein is Profilin-2 (PRO2) of Olea europaea (Common olive).